The sequence spans 231 residues: uncharacterized protein (231 aa).

A helical membrane pass occupies residues 10–30 (SQNIFFIAIVIFILSSVILYH).

The protein localises to the membrane. This is an uncharacterized protein from Rickettsia prowazekii (strain Madrid E).